A 319-amino-acid polypeptide reads, in one-letter code: Inactive hydroxysteroid dehydrogenase-like protein 1 (319 aa).

The interval 2-82 (AAVDSFQLLY…CGASEAIAKA (81 aa)) is required for mitochondria translocation. Residues 74–80 (GASEAIA), lysine 99, and aspartate 125 each bind NADP(+).

The protein belongs to the short-chain dehydrogenases/reductases (SDR) family. 17-beta-HSD 3 subfamily.

The protein resides in the mitochondrion. In Danio rerio (Zebrafish), this protein is Inactive hydroxysteroid dehydrogenase-like protein 1 (hsdl1).